Reading from the N-terminus, the 838-residue chain is Leucine--tRNA ligase (838 aa).

A 'HIGH' region motif is present at residues 36-46 (PYPSGKIHMGH). Residues 611 to 615 (KMSKS) carry the 'KMSKS' region motif. Lys-614 contacts ATP.

The protein belongs to the class-I aminoacyl-tRNA synthetase family.

It localises to the cytoplasm. The catalysed reaction is tRNA(Leu) + L-leucine + ATP = L-leucyl-tRNA(Leu) + AMP + diphosphate. The protein is Leucine--tRNA ligase of Wolbachia sp. subsp. Drosophila simulans (strain wRi).